Consider the following 332-residue polypeptide: MSGAGVLAGLGTALPARLVTNEELSRHLDTDDEWIRSRTGIGQRYWSDGASTGDLAVEAGQRALKAAGTDTVDLVVLATTTPDHPCPATAPDVADRLGLSGVAAYDIAAVCSGFIYGLASAVAHITAGLVGSALVIGAETYSTILDPLDRTTSVIFGDGAGAVVLRSGSVDERGAFLGFDLGSDGALKDLIVIPGGGSRERAAAERPQPAGAYFTMQGKPVFRHAVTRMTSSAGALLDRTGWSPASVDRFVGHQANARILHAVADQLRIDGARTVIDLDRVGNTSAASIPLALSRACGEGLLSPGDRVLLSAFGGGLTWGSTALLWPDITAL.

Active-site residues include cysteine 111 and histidine 253. An ACP-binding region spans residues 254–258; it reads QANAR. The active site involves asparagine 283.

The protein belongs to the thiolase-like superfamily. FabH family. Homodimer.

It localises to the cytoplasm. It catalyses the reaction malonyl-[ACP] + acetyl-CoA + H(+) = 3-oxobutanoyl-[ACP] + CO2 + CoA. The protein operates within lipid metabolism; fatty acid biosynthesis. Catalyzes the condensation reaction of fatty acid synthesis by the addition to an acyl acceptor of two carbons from malonyl-ACP. Catalyzes the first condensation reaction which initiates fatty acid synthesis and may therefore play a role in governing the total rate of fatty acid production. Possesses both acetoacetyl-ACP synthase and acetyl transacylase activities. Its substrate specificity determines the biosynthesis of branched-chain and/or straight-chain of fatty acids. This chain is Beta-ketoacyl-[acyl-carrier-protein] synthase III 5, found in Streptomyces coelicolor (strain ATCC BAA-471 / A3(2) / M145).